A 463-amino-acid polypeptide reads, in one-letter code: MTKQATNAVLKKGQRFPLTIKRLGINGEGVGYFKRHVVFVPGALPGEEVVVEVTDVKPRFAEASIRKIRKSSPDRISPPCPVYDQCGGCQLQHLSYEATLKEKREIVKQAFERHTTLRADTLTILPTIGMEDPWAYRNKSQLQLKTEKGQVKAGLYVMNTHKLVDLSSCLVQHDATNEASEVVKQIVQDLQIPTYNERKRTGILRSVVSRVGFETGELQVILVTTKKDFPKKDLLVEEIKSRLPHVKSLQQNINPKKTSLIMGDETISLFGEETIEETLGDISFSLSARAFFQLNPKQTVKLYNEVKRAAALTGKEKVIDAYCGVGTIGLWLADQAREVRGMDVIAEAIEDAKENAKRQGITNVQYEVGKAEKIIPSWVRSSWIPDVIVVDPPRTGCDDQLLKTIKQTKPKRIVYVSCNPSTLAKDVEQLQRSGYKVKNIQPVDMFPWTAQVESCTLLVYEGK.

Residues 9 to 67 (VLKKGQRFPLTIKRLGINGEGVGYFKRHVVFVPGALPGEEVVVEVTDVKPRFAEASIRK) form the TRAM domain. Positions 80, 86, 89, and 169 each coordinate [4Fe-4S] cluster. Residues Gln-293, Tyr-322, Asp-343, and Asp-391 each coordinate S-adenosyl-L-methionine. Residue Cys-418 is the Nucleophile of the active site.

It belongs to the class I-like SAM-binding methyltransferase superfamily. RNA M5U methyltransferase family.

This is an uncharacterized protein from Halalkalibacterium halodurans (strain ATCC BAA-125 / DSM 18197 / FERM 7344 / JCM 9153 / C-125) (Bacillus halodurans).